A 428-amino-acid chain; its full sequence is E3 ubiquitin-protein ligase RNF128 (428 aa).

The N-terminal stretch at 1–38 (MGPPLGAGVSCRGGCGSSRLLAWCFLLALSPQAPGSRG) is a signal peptide. N-linked (GlcNAc...) asparagine glycans are attached at residues Asn48, Asn59, and Asn101. Positions 75 to 183 (SPLEPVAGVL…LKGTKILQSI (109 aa)) constitute a PA domain. Residues 208-228 (IFFVSVSFFIITAATVGYFIF) form a helical membrane-spanning segment. An RING-type; atypical zinc finger spans residues 277–318 (CAVCIELYKPNDLVRILTCNHIFHKTCVDPWLLEHRTCPMCK). The segment at 346 to 428 (ISNSASSHEE…QETAVREIKS (83 aa)) is disordered. Basic and acidic residues predominate over residues 416-428 (TPHQETAVREIKS).

Auto-ubiquitinated. Controls the development of T-cell clonal anergy by ubiquitination.

The protein resides in the cytoplasm. It localises to the endomembrane system. Its subcellular location is the cytoskeleton. It is found in the perinuclear region. The enzyme catalyses S-ubiquitinyl-[E2 ubiquitin-conjugating enzyme]-L-cysteine + [acceptor protein]-L-lysine = [E2 ubiquitin-conjugating enzyme]-L-cysteine + N(6)-ubiquitinyl-[acceptor protein]-L-lysine.. It participates in protein modification; protein ubiquitination. E3 ubiquitin-protein ligase that catalyzes 'Lys-27', 'Lys-48'- or 'Lys-63'-linked polyubiquitin chains formation and plays a role in different biological processes such as modulation of immune response, cytoskeletal dynamics or protein homeostasis. Inhibits IL2 and IL4 transcription, thereby playing an important role in the induction of the anergic phenotype, a long-term stable state of T-lymphocyte unresponsiveness to antigenic stimulation associated with the blockade of interleukin production. Ubiquitinates ARPC5 with 'Lys-48' linkages and COR1A with 'Lys-63' linkages leading to their degradation, down-regulation of these cytoskeletal components results in impaired lamellipodium formation and reduced accumulation of F-actin at the immunological synapse. Functions in the patterning of the dorsal ectoderm; sensitizes ectoderm to respond to neural-inducing signals. Plays a positive role in innate immune response by promoting 'Lys-63'-linked ubiquitination of TBK1 after RNA- or DNA-virus infection. Regulates alveolar macrophage activation and neutrophil infiltration by interacting with TLR4, targeting it for degradation, and inhibiting NF-kappa-B activation, hence decreasing pro-inflammatory cytokines. Negatively regulates the IL-3/STAT5 signaling pathway by facilitating 'Lys-27'-linked polyubiquitination of IL3RA leading to its degradation via lysosomal pathway. Directly regulates the N-glycosylation process in the endoplasmic reticulum by targeting the glycosyl-transferase RPN1 for ubiquitination and degradation. Other substrates targeted for degradation by RNF128 include transmembrane proteins CD40L, CD83 or the tetraspanin CD151. The polypeptide is E3 ubiquitin-protein ligase RNF128 (RNF128) (Pongo abelii (Sumatran orangutan)).